Reading from the N-terminus, the 677-residue chain is Membrane-associated tyrosine- and threonine-specific cdc2-inhibitory kinase wee-1.3 (677 aa).

A compositionally biased stretch (polar residues) spans 1 to 22 (MDDTEGNSSMDSIRNGQSSPLP). Residues 1–30 (MDDTEGNSSMDSIRNGQSSPLPQVTPRLPQ) are disordered. Residues 108–355 (FQIDEIIGRG…SRDLLDHPVI (248 aa)) form the Protein kinase domain. ATP-binding positions include 114–122 (IGRGSFGEV) and Lys-137. Asp-228 (proton acceptor) is an active-site residue. 2 residues coordinate Mg(2+): Asn-233 and Asp-246. Disordered regions lie at residues 478 to 526 (FDND…GTPR) and 632 to 677 (EPSN…GDEV). The segment covering 489-499 (ATCSSSNSSAI) has biased composition (polar residues). Positions 638-652 (TVDHHTILEQSESPR) are enriched in basic and acidic residues.

The protein belongs to the protein kinase superfamily. Ser/Thr protein kinase family. WEE1 subfamily.

The protein localises to the golgi apparatus membrane. It localises to the cytoplasm. The enzyme catalyses L-seryl-[protein] + ATP = O-phospho-L-seryl-[protein] + ADP + H(+). It carries out the reaction L-threonyl-[protein] + ATP = O-phospho-L-threonyl-[protein] + ADP + H(+). Acts as a negative regulator of entry into mitosis (G2 to M transition) by phosphorylation of the CDK1 kinase during oocyte maturation. Required for oocyte maturation, embryonic development, germline proliferation and initiation of meiosis during spermatogenesis. Required for chromosome structure during mitosis and negative regulation of nuclear envelope breakdown. The chain is Membrane-associated tyrosine- and threonine-specific cdc2-inhibitory kinase wee-1.3 (wee-1.3) from Caenorhabditis elegans.